Consider the following 414-residue polypeptide: Probable elongation factor 1-gamma 1 (414 aa).

One can recognise a GST N-terminal domain in the interval 1-82 (MALVLHTYKG…YVSRLNGDNS (82 aa)). Residues 87–215 (SLIEYAQIEQ…VKQTEAVPPI (129 aa)) enclose the GST C-terminal domain. Positions 214-224 (PIASKKAAQPA) are enriched in low complexity. The disordered stretch occupies residues 214–260 (PIASKKAAQPAKPKEEPKKKEAPVAEAPKLAEEEEAPKPKAKNPLDL). Residues 225-236 (KPKEEPKKKEAP) are compositionally biased toward basic and acidic residues. The 161-residue stretch at 254–414 (AKNPLDLLPP…EALLDAKCFK (161 aa)) folds into the EF-1-gamma C-terminal domain.

As to quaternary structure, EF-1 is composed of four subunits: alpha, beta, delta, and gamma.

Its function is as follows. Probably plays a role in anchoring the complex to other cellular components. The chain is Probable elongation factor 1-gamma 1 from Arabidopsis thaliana (Mouse-ear cress).